Reading from the N-terminus, the 273-residue chain is Cytoplasmic phosphatidylinositol transfer protein 1 (273 aa).

The interval 244 to 273 (QAETNEKIHNTSGGANAAANAKEANDGDID) is disordered.

It belongs to the PtdIns transfer protein family. PI transfer class IIB subfamily.

Its function is as follows. Phosphatidylinositol transfer proteins mediate the monomeric transport of lipids by shielding a lipid from the aqueous environment and binding the lipid in a hydrophobic cavity. The chain is Cytoplasmic phosphatidylinositol transfer protein 1 (rdgBbeta) from Drosophila melanogaster (Fruit fly).